The primary structure comprises 916 residues: Protein translocase subunit SecA (916 aa).

ATP is bound by residues Gln87, 105-109 (GEGKT), and Asp507. Zn(2+) is bound by residues Cys900, Cys902, Cys911, and His912.

Belongs to the SecA family. In terms of assembly, monomer and homodimer. Part of the essential Sec protein translocation apparatus which comprises SecA, SecYEG and auxiliary proteins SecDF-YajC and YidC. Zn(2+) serves as cofactor.

The protein resides in the cell inner membrane. Its subcellular location is the cytoplasm. The catalysed reaction is ATP + H2O + cellular proteinSide 1 = ADP + phosphate + cellular proteinSide 2.. In terms of biological role, part of the Sec protein translocase complex. Interacts with the SecYEG preprotein conducting channel. Has a central role in coupling the hydrolysis of ATP to the transfer of proteins into and across the cell membrane, serving both as a receptor for the preprotein-SecB complex and as an ATP-driven molecular motor driving the stepwise translocation of polypeptide chains across the membrane. The sequence is that of Protein translocase subunit SecA from Neisseria gonorrhoeae (strain ATCC 700825 / FA 1090).